The following is a 569-amino-acid chain: uncharacterized protein (569 aa).

A helical membrane pass occupies residues 2-22 (VVIAALLGSLAVLAFLFYLWY).

It is found in the membrane. This is an uncharacterized protein from Mycoplasma pneumoniae (strain ATCC 29342 / M129 / Subtype 1) (Mycoplasmoides pneumoniae).